We begin with the raw amino-acid sequence, 258 residues long: Methylthioribulose-1-phosphate dehydratase (258 aa).

The interval 1–21 is disordered; sequence MCSPTTENNNNNNDHLVQSSD. Substrate is bound at residue cysteine 105. Zn(2+) is bound by residues histidine 123 and histidine 125. Catalysis depends on glutamate 153, which acts as the Proton donor/acceptor. Zn(2+) is bound at residue histidine 210.

Belongs to the aldolase class II family. MtnB subfamily. It depends on Zn(2+) as a cofactor.

It is found in the cytoplasm. The catalysed reaction is 5-(methylsulfanyl)-D-ribulose 1-phosphate = 5-methylsulfanyl-2,3-dioxopentyl phosphate + H2O. It participates in amino-acid biosynthesis; L-methionine biosynthesis via salvage pathway; L-methionine from S-methyl-5-thio-alpha-D-ribose 1-phosphate: step 2/6. In terms of biological role, catalyzes the dehydration of methylthioribulose-1-phosphate (MTRu-1-P) into 2,3-diketo-5-methylthiopentyl-1-phosphate (DK-MTP-1-P). The protein is Methylthioribulose-1-phosphate dehydratase of Neurospora crassa (strain ATCC 24698 / 74-OR23-1A / CBS 708.71 / DSM 1257 / FGSC 987).